The primary structure comprises 172 residues: Large ribosomal subunit protein uL10 (172 aa).

This sequence belongs to the universal ribosomal protein uL10 family. As to quaternary structure, part of the ribosomal stalk of the 50S ribosomal subunit. The N-terminus interacts with L11 and the large rRNA to form the base of the stalk. The C-terminus forms an elongated spine to which L12 dimers bind in a sequential fashion forming a multimeric L10(L12)X complex.

Its function is as follows. Forms part of the ribosomal stalk, playing a central role in the interaction of the ribosome with GTP-bound translation factors. The protein is Large ribosomal subunit protein uL10 of Dinoroseobacter shibae (strain DSM 16493 / NCIMB 14021 / DFL 12).